Reading from the N-terminus, the 951-residue chain is Leucine-rich repeat-containing G-protein coupled receptor 4 (951 aa).

The first 19 residues, 1 to 19, serve as a signal peptide directing secretion; that stretch reads MPGPLGLLCFLALGLRGSA. Residues 20–544 are Extracellular-facing; it reads EPSGAAPPLC…LLGSWMIRLT (525 aa). In terms of domain architecture, LRRNT spans 25-57; sequence APPLCAAPCSCDGDRRVDCSGKGLTAVPEGLSA. 2 disulfides stabilise this stretch: Cys-29-Cys-35 and Cys-33-Cys-43. 11 LRR repeats span residues 35–58, 59–79, 81–103, 104–127, 128–151, 153–175, 176–199, 201–223, 224–247, 248–270, and 272–294; these read CDGDRRVDCSGKGLTAVPEGLSAF, TQLLDISMNNITQLPEDAFKN, PFLEELRLAGNDLSFIHPKALSG, LKELKVLTLQNNQLKTVPSEAIRG, LSSLQSLRLDANHITSVPEDSFEG, TQLRHLWLDDNSLTEVPVHPLSN, LPTLQALTLALNKISSIPDFAFTN, SSLVVLHLHNNKIKSLGQHCFDG, LDNLETLDLNYNNLGEFPQAIKAL, PSLKELLFHSNSISVIPDGAFDG, and PLLKTIHLYDNPLSFVGNSAFHN. Residue Asn-68 is glycosylated (N-linked (GlcNAc...) asparagine). Asn-199 is a glycosylation site (N-linked (GlcNAc...) asparagine). Residues Asn-294 and Asn-314 are each glycosylated (N-linked (GlcNAc...) asparagine). LRR repeat units follow at residues 318 to 341, 342 to 363, 364 to 387, 388 to 411, and 413 to 435; these read TVRLESLTLTGTKISSISNNLCQE, QKRLRTLDLSYNSIKDLPSFNG, CHALEEISLQRNQIHQIKEDTFQG, LTSLKILDLSRNLIHEIDDRAFAK, and GSITNLDVSFNELTSFPTEGLNG. Cys-339 and Cys-364 are joined by a disulfide. Intrachain disulfides connect Cys-470–Cys-522 and Cys-471–Cys-476. A helical membrane pass occupies residues 545-565; that stretch reads VWFIFLVALFFNLLVILTTFA. The Cytoplasmic segment spans residues 566–575; sequence SCTSVPSSKL. Residues 576–596 traverse the membrane as a helical segment; the sequence is FIGLISVSNLFMGAYTGILTF. Residues 597–619 are Extracellular-facing; that stretch reads LDAVSWGRFAEFGIWWEIGSGCK. Cys-618 and Cys-693 are joined by a disulfide. A helical transmembrane segment spans residues 620–640; sequence IAGFLAVFSSESAIFLLMLAA. Topologically, residues 641–661 are cytoplasmic; it reads VERSLSAKDMMKNGKSNHLRQ. The helical transmembrane segment at 662 to 682 threads the bilayer; it reads FRIAALLAFLGAAVAGSFPLF. At 683–703 the chain is on the extracellular side; that stretch reads HRGEYSASPLCLPFPTGETPS. Residues 704–724 form a helical membrane-spanning segment; that stretch reads LGFTVTLVLLNSLAFLLMAII. The Cytoplasmic segment spans residues 725-756; sequence YTKLYCNLEKEDLSESSQSSMIKHVAWLIFTN. The chain crosses the membrane as a helical span at residues 757–777; sequence CIFFCPVAFFSFAPLITAVSI. Topologically, residues 778 to 783 are extracellular; the sequence is SPEIMK. The helical transmembrane segment at 784–804 threads the bilayer; sequence SVTLIFFPLPACLNPVLYVFF. At 805–951 the chain is on the cytoplasmic side; the sequence is NPKFKEDWKL…YAYNLPRVKD (147 aa). Ser-920 is subject to Phosphoserine.

This sequence belongs to the G-protein coupled receptor 1 family.

The protein localises to the cell membrane. In terms of biological role, receptor for R-spondins that potentiates the canonical Wnt signaling pathway and is involved in the formation of various organs. Upon binding to R-spondins (RSPO1, RSPO2, RSPO3 or RSPO4), associates with phosphorylated LRP6 and frizzled receptors that are activated by extracellular Wnt receptors, triggering the canonical Wnt signaling pathway to increase expression of target genes. In contrast to classical G-protein coupled receptors, does not activate heterotrimeric G-proteins to transduce the signal. Its function as activator of the Wnt signaling pathway is required for the development of various organs, including liver, kidney, intestine, bone, reproductive tract and eye. May also act as a receptor for norrin (NDP), such results however required additional confirmation in vivo. Required during spermatogenesis to activate the Wnt signaling pathway in peritubular myoid cells. Required for the maintenance of intestinal stem cells and Paneth cell differentiation in postnatal intestinal crypts. Acts as a regulator of bone formation and remodeling. Involved in kidney development; required for maintaining the ureteric bud in an undifferentiated state. Involved in the development of the anterior segment of the eye. Required during erythropoiesis. Also acts as a negative regulator of innate immunity by inhibiting TLR2/TLR4 associated pattern-recognition and pro-inflammatory cytokine production. Plays an important role in regulating the circadian rhythms of plasma lipids, partially through regulating the rhythmic expression of MTTP. Required for proper development of GnRH neurons (gonadotropin-releasing hormone expressing neurons) that control the release of reproductive hormones from the pituitary gland. The chain is Leucine-rich repeat-containing G-protein coupled receptor 4 (LGR4) from Bos taurus (Bovine).